Consider the following 520-residue polypeptide: Cyclic AMP-responsive element-binding protein 3-like protein 2 (520 aa).

The Cytoplasmic portion of the chain corresponds to 1 to 378 (MEVLESGEQG…CKLAGTQTGT (378 aa)). The residue at position 93 (S93) is a Phosphoserine. K178 participates in a covalent cross-link: Glycyl lysine isopeptide (Lys-Gly) (interchain with G-Cter in SUMO2). At S191 the chain carries Phosphoserine. The tract at residues 195–264 (APVDHLHLPP…PHKLQGSGPL (70 aa)) is disordered. Composition is skewed to low complexity over residues 208-220 (SSHGSDSEGSLSP) and 234-255 (SPSRAAPRAPSALSSSPLLTAP). In terms of domain architecture, bZIP spans 294–357 (ALKKIRRKIK…RTLLQQLQKL (64 aa)). Residues 296–325 (KKIRRKIKNKISAQESRRKKKEYMDSLEKK) form a basic motif region. Residues 336–357 (LRKKVEVLENTNRTLLQQLQKL) form a leucine-zipper region. The chain crosses the membrane as a helical; Signal-anchor for type II membrane protein span at residues 379–399 (CLMVVVLCFAVAFGSFFQGYG). Over 400–520 (PYPSATKMAL…ELDRRVNTTF (121 aa)) the chain is Lumenal. Residues 427–430 (RNLL) carry the S1P recognition motif. N-linked (GlcNAc...) asparagine glycans are attached at residues N480, N504, and N517.

Belongs to the bZIP family. ATF subfamily. As to quaternary structure, binds DNA as a dimer. Upon ER stress, translocated to the Golgi apparatus, where it is processed by regulated intramembrane proteolysis (RIP) to release the cytosol-facing N-terminal transcription factor domain. The cleavage is performed sequentially by site-1 and site-2 proteases (S1P/MBTPS1 and S2P/MBTPS2). Post-translationally, N-glycosylated. In terms of processing, ubiquitinated by HRD1/SYVN1; undergoes 'Lys-48'-linked ubiquitination, followed by rapid proteasomal degradation under normal conditions. Upon ER stress, SYVN1 E3 ubiquitin-protein ligase dissociates from its substrate, ubiquitination does not occur and CREB3L2 is stabilized.

The protein resides in the endoplasmic reticulum membrane. It localises to the nucleus. Transcription factor involved in unfolded protein response (UPR). In the absence of endoplasmic reticulum (ER) stress, inserted into ER membranes, with N-terminal DNA-binding and transcription activation domains oriented toward the cytosolic face of the membrane. In response to ER stress, transported to the Golgi, where it is cleaved in a site-specific manner by resident proteases S1P/MBTPS1 and S2P/MBTPS2. The released N-terminal cytosolic domain is translocated to the nucleus to effect transcription of specific target genes. Plays a critical role in chondrogenesis by activating the transcription of SEC23A, which promotes the transport and secretion of cartilage matrix proteins, and possibly that of ER biogenesis-related genes. In a neuroblastoma cell line, protects cells from ER stress-induced death. In vitro activates transcription of target genes via direct binding to the CRE site. This Pongo abelii (Sumatran orangutan) protein is Cyclic AMP-responsive element-binding protein 3-like protein 2 (CREB3L2).